Reading from the N-terminus, the 499-residue chain is L-arabinose isomerase (499 aa).

The Mn(2+) site is built by glutamate 306, glutamate 333, histidine 350, and histidine 449.

This sequence belongs to the arabinose isomerase family. Mn(2+) serves as cofactor.

It carries out the reaction beta-L-arabinopyranose = L-ribulose. The protein operates within carbohydrate degradation; L-arabinose degradation via L-ribulose; D-xylulose 5-phosphate from L-arabinose (bacterial route): step 1/3. In terms of biological role, catalyzes the conversion of L-arabinose to L-ribulose. The chain is L-arabinose isomerase from Aeromonas salmonicida (strain A449).